The chain runs to 397 residues: 2-deoxy-scyllo-inosose synthase (397 aa).

NAD(+)-binding positions include Asp41, Glu71–Lys74, Gly103–Asn107, Thr127–Ser128, Ser138–Lys140, and Lys149–Asn150. Lys140 is an active-site residue. Position 182 (Glu182) interacts with Co(2+). Glu242 is an active-site residue. Residues His245 and His261 each contribute to the Co(2+) site.

This sequence belongs to the sugar phosphate cyclases superfamily. DOI synthase family. It depends on NAD(+) as a cofactor. Co(2+) is required as a cofactor.

The catalysed reaction is D-glucose 6-phosphate = 2-deoxy-L-scyllo-inosose + phosphate. It functions in the pathway metabolic intermediate biosynthesis; 2-deoxystreptamine biosynthesis; 2-deoxystreptamine from D-glucose 6-phosphate: step 1/4. The protein operates within antibiotic biosynthesis; gentamicin biosynthesis. In terms of biological role, catalyzes the intramolecular carbocycle formation from D-glucose-6-phosphate to 2-deoxy-scyllo-inosose (DOI). The protein is 2-deoxy-scyllo-inosose synthase (gtmA) of Micromonospora echinospora (Micromonospora purpurea).